We begin with the raw amino-acid sequence, 533 residues long: 2,3-bisphosphoglycerate-independent phosphoglycerate mutase (533 aa).

D15 and S65 together coordinate Mn(2+). S65 functions as the Phosphoserine intermediate in the catalytic mechanism. Residues H126, 156–157, R188, R194, 258–261, and K331 each bind substrate; these read RD and RPDR. Positions 398, 402, 439, 440, and 457 each coordinate Mn(2+).

It belongs to the BPG-independent phosphoglycerate mutase family. As to quaternary structure, monomer. Mn(2+) serves as cofactor.

It carries out the reaction (2R)-2-phosphoglycerate = (2R)-3-phosphoglycerate. The protein operates within carbohydrate degradation; glycolysis; pyruvate from D-glyceraldehyde 3-phosphate: step 3/5. Catalyzes the interconversion of 2-phosphoglycerate and 3-phosphoglycerate. In Trichormus variabilis (strain ATCC 29413 / PCC 7937) (Anabaena variabilis), this protein is 2,3-bisphosphoglycerate-independent phosphoglycerate mutase.